We begin with the raw amino-acid sequence, 226 residues long: MLYNFIHNIHKEGYIFIMISFLASCIGFAISCSLGIICLVISLLCIYFFRDPIRMVPEGDDLITSPADGLILDIKEVNSPIDDSTQVVCISIFLNVLNVHVNRIPVSGTIKATEYIPGRFISASLNKSSELNERQRLIIESKIDNRSIIVDQIAGLIARRIVCNVSEGQQVNSGERFGIIRFGSRVNLYLPLNTHISVFKGQTVIGGETILAYLQDAPKQLTVKSI.

Catalysis depends on Ser184, which acts as the Schiff-base intermediate with substrate; via pyruvic acid. Ser184 carries the post-translational modification Pyruvic acid (Ser); by autocatalysis.

The protein belongs to the phosphatidylserine decarboxylase family. PSD-A subfamily. As to quaternary structure, heterodimer of a large membrane-associated beta subunit and a small pyruvoyl-containing alpha subunit. Requires pyruvate as cofactor. In terms of processing, is synthesized initially as an inactive proenzyme. Formation of the active enzyme involves a self-maturation process in which the active site pyruvoyl group is generated from an internal serine residue via an autocatalytic post-translational modification. Two non-identical subunits are generated from the proenzyme in this reaction, and the pyruvate is formed at the N-terminus of the alpha chain, which is derived from the carboxyl end of the proenzyme. The post-translation cleavage follows an unusual pathway, termed non-hydrolytic serinolysis, in which the side chain hydroxyl group of the serine supplies its oxygen atom to form the C-terminus of the beta chain, while the remainder of the serine residue undergoes an oxidative deamination to produce ammonia and the pyruvoyl prosthetic group on the alpha chain.

The protein resides in the cell membrane. It catalyses the reaction a 1,2-diacyl-sn-glycero-3-phospho-L-serine + H(+) = a 1,2-diacyl-sn-glycero-3-phosphoethanolamine + CO2. It functions in the pathway phospholipid metabolism; phosphatidylethanolamine biosynthesis; phosphatidylethanolamine from CDP-diacylglycerol: step 2/2. Catalyzes the formation of phosphatidylethanolamine (PtdEtn) from phosphatidylserine (PtdSer). This Ehrlichia chaffeensis (strain ATCC CRL-10679 / Arkansas) protein is Phosphatidylserine decarboxylase proenzyme.